A 430-amino-acid polypeptide reads, in one-letter code: MASSLLEPSLAAIALVILLASVSLSRKKRPAAPEPQGLSVLGNLFDIPKRASSIIYLALGKPYNTLTKRAVSQLQGYTPGSHIDATSHSPRVFRLPNLEETFSVFPDHGLNPNYTSARTDSRAWINQYTKVVCGPKMVAFMNNCEFELSNSHCYPYAGYKGLKATMDLTNILWLYDEYTDTGSGAEAVKAAGIVARALREPDYDDGTWVCRMMKSFKQNHIDKAGPGVARRFIDNFCNYVEVVGREAELREKNEVLDIPNYVTFRRETSAVRTCFDLVEYCLDLDLPQYVHDDPVFISGYNAGMDLVFWANDLVSYNMEQSKGHSGANVVTVIMKSKGVDLQTAVDFLGGYCEALTAQLLEAKRILQARSDAAYSRDVVRLMDAFGDWVRGNVAWSFETERYFGKENKRVKETLLVELKEPFVGALALKE.

Positions 1–25 (MASSLLEPSLAAIALVILLASVSLS) are cleaved as a signal peptide. Residue Asn113 is glycosylated (N-linked (GlcNAc...) asparagine). Mg(2+)-binding residues include Asp176, Asn311, Ser315, and Glu319. Residues 176-180 (DEYTD) carry the DDXXD motif motif. The (2E,6E)-farnesyl diphosphate site is built by Arg401 and Tyr402.

The protein belongs to the terpene synthase family. Requires Mg(2+) as cofactor.

The enzyme catalyses (2E,6E)-farnesyl diphosphate = viridiflorene + diphosphate. Terpene cyclase that catalyzes the cyclization of farnesyl diphosphate (FPP) to viridiflorene and viridiflorol. The protein is Sesquiterpene synthase Agr5 of Cyclocybe aegerita (Black poplar mushroom).